Reading from the N-terminus, the 496-residue chain is MELQISSAIIILVATFVASLLIKQWRKSESRQNLPPGPPKLPLVGHLHLLWGKLPQHAMADMAKKYGPVTHVQLGEVFSVVLSSREATKEAMKLLDPACADRFESIGTRIMWYDNDDIIFSPYSDHWRQMRKICVSELLSARNVRSFGFIRQDEMSRLLRHLQSSAGETVDMTERIATLTCSIICRAAFGAIINDHEELVELVKDSLSMASGFELADLFPSSKLLNLLCWNKSKLWRMRRRVDTILEAIVDEHKLKKSGEFGGEDIIDVLFRMQKDSQIKVPITTNAIKAFIFDTFSAGTETSSTTTLWVMAELMRNPAVMAKAQAEVRAALKGKTSVDVDDVQELKYMKSVVKETMRMHPPIPLIPRSCREECEVNGYKIPNKARIMINVWSMGRNPLYWEKPETFWPERFDQVSRDFMGSDFEFIPFGAGRRICPGLNFGLANVEVPLAQLLYHFDWKLAEGMKPSDMDMSEAEGLTGIRKNNLLLVPTLYKSP.

A helical; Signal-anchor transmembrane segment spans residues 2–22 (ELQISSAIIILVATFVASLLI). Cys436 contacts heme.

It belongs to the cytochrome P450 family. The cofactor is heme.

The protein resides in the endoplasmic reticulum membrane. The enzyme catalyses (4S)-limonene + reduced [NADPH--hemoprotein reductase] + O2 = (1S,6R)-isopiperitenol + oxidized [NADPH--hemoprotein reductase] + H2O + H(+). Hydroxylates both (+)- and (-)-limonene to (+) and (-)-trans-isopiperitenol. The protein is Cytochrome P450 71D95 (CYP71D95) of Mentha spicata (Spearmint).